The sequence spans 939 residues: Probable importin ECU10_0620 (939 aa).

The region spanning 23-90 (AEAMLMDLEK…VENILDLFLY (68 aa)) is the Importin N-terminal domain.

It belongs to the importin beta family.

It is found in the nucleus. It localises to the cytoplasm. Its function is as follows. Active in protein import into the nucleus. This Encephalitozoon cuniculi (strain GB-M1) (Microsporidian parasite) protein is Probable importin ECU10_0620.